The following is a 655-amino-acid chain: p-hydroxybenzoic acid efflux pump subunit AaeB (655 aa).

At 1-12 (MGIFSIANQHIR) the chain is on the periplasmic side. A helical membrane pass occupies residues 13-33 (FAVKLATAIVLALFVGFHFQL). Residues 34-37 (ETPR) lie on the Cytoplasmic side of the membrane. A helical transmembrane segment spans residues 38-58 (WAVLTAAIVAAGPAFAAGGEP). Residues 59–68 (YSGAIRYRGF) lie on the Periplasmic side of the membrane. Residues 69–89 (LRIIGTFIGCIAGLVIIIAMI) form a helical membrane-spanning segment. The Cytoplasmic segment spans residues 90-92 (RAP). The helical transmembrane segment at 93–113 (LLMILVCCIWAGFCTWISSLV) threads the bilayer. Over 114–120 (RIENSYA) the chain is Periplasmic. A helical transmembrane segment spans residues 121 to 141 (WGLAGYTALIIVITIQPEPLL). Residues 142–151 (TPQFAVERCS) are Cytoplasmic-facing. Residues 152–172 (EIVIGIVCAIMADLLFSPRSI) form a helical membrane-spanning segment. At 173–369 (KQEVDRELES…RTTLSCILGT (197 aa)) the chain is on the periplasmic side. The helical transmembrane segment at 370–390 (LFWLWTGWTSGSGAMVMIAVV) threads the bilayer. The Cytoplasmic portion of the chain corresponds to 391–406 (TSLAMRLPNPRMVAID). The helical transmembrane segment at 407–427 (FIYGTLAALPLGLLYFLVIIP) threads the bilayer. The Periplasmic portion of the chain corresponds to 428-430 (NTQ). A helical membrane pass occupies residues 431 to 451 (QSMLLLCISLAVLGFFLGIEV). Residues 452 to 458 (QKRRLGS) lie on the Cytoplasmic side of the membrane. The helical transmembrane segment at 459–479 (MGALASTINIIVLDNPMTFHF) threads the bilayer. The Periplasmic portion of the chain corresponds to 480–481 (SQ). Residues 482-502 (FLDSALGQIVGCVLAFTVILL) traverse the membrane as a helical segment. The Cytoplasmic segment spans residues 503-655 (VRDKSRDRTG…HKYQHALTDS (153 aa)).

The protein belongs to the aromatic acid exporter ArAE (TC 2.A.85) family.

Its subcellular location is the cell inner membrane. In terms of biological role, forms an efflux pump with AaeA. Could function as a metabolic relief valve, allowing to eliminate certain compounds when they accumulate to high levels in the cell. This is p-hydroxybenzoic acid efflux pump subunit AaeB from Shigella flexneri.